Here is a 265-residue protein sequence, read N- to C-terminus: Hydroxyethylthiazole kinase (265 aa).

M50 provides a ligand contact to substrate. R125 and T171 together coordinate ATP. G198 contacts substrate.

It belongs to the Thz kinase family. Requires Mg(2+) as cofactor.

It catalyses the reaction 5-(2-hydroxyethyl)-4-methylthiazole + ATP = 4-methyl-5-(2-phosphooxyethyl)-thiazole + ADP + H(+). The protein operates within cofactor biosynthesis; thiamine diphosphate biosynthesis; 4-methyl-5-(2-phosphoethyl)-thiazole from 5-(2-hydroxyethyl)-4-methylthiazole: step 1/1. Catalyzes the phosphorylation of the hydroxyl group of 4-methyl-5-beta-hydroxyethylthiazole (THZ). The chain is Hydroxyethylthiazole kinase from Cronobacter sakazakii (strain ATCC BAA-894) (Enterobacter sakazakii).